We begin with the raw amino-acid sequence, 529 residues long: Probable biotin-dependent acyl-coenzyme A carboxylase beta2 subunit (529 aa).

The CoA carboxyltransferase N-terminal domain occupies 20–271; it reads MSGKLDEINA…IKQGPAPAPV (252 aa). In terms of domain architecture, CoA carboxyltransferase C-terminal spans 270 to 520; sequence PVTEPLFDAE…SAIANGPIKG (251 aa).

This sequence belongs to the AccD/PCCB family. In terms of assembly, the biotin-dependent acyl-CoA carboxylase complex is composed of an AccA protein, which contains the biotin carboxylase (BC) and biotin carboxyl carrier protein (BCCP) domains, and an AccD protein, which contains the carboxyl transferase (CT) domain.

Its function is as follows. Component of a biotin-dependent acyl-CoA carboxylase complex. This subunit transfers the CO2 from carboxybiotin to the CoA ester substrate. The sequence is that of Probable biotin-dependent acyl-coenzyme A carboxylase beta2 subunit (accD2) from Mycobacterium tuberculosis (strain ATCC 25618 / H37Rv).